Here is a 312-residue protein sequence, read N- to C-terminus: Acetylglutamate kinase (312 aa).

Residues 76 to 77, Arg-98, and Asn-199 each bind substrate; that span reads GG.

This sequence belongs to the acetylglutamate kinase family. ArgB subfamily.

It localises to the cytoplasm. It catalyses the reaction N-acetyl-L-glutamate + ATP = N-acetyl-L-glutamyl 5-phosphate + ADP. It participates in amino-acid biosynthesis; L-arginine biosynthesis; N(2)-acetyl-L-ornithine from L-glutamate: step 2/4. Its function is as follows. Catalyzes the ATP-dependent phosphorylation of N-acetyl-L-glutamate. The protein is Acetylglutamate kinase of Beutenbergia cavernae (strain ATCC BAA-8 / DSM 12333 / CCUG 43141 / JCM 11478 / NBRC 16432 / NCIMB 13614 / HKI 0122).